A 425-amino-acid polypeptide reads, in one-letter code: Serine--tRNA ligase (425 aa).

228-230 (TAE) contributes to the L-serine binding site. Residue 259-261 (RSE) coordinates ATP. Glu-282 serves as a coordination point for L-serine. 346–349 (EIAS) provides a ligand contact to ATP. Ser-382 serves as a coordination point for L-serine.

The protein belongs to the class-II aminoacyl-tRNA synthetase family. Type-1 seryl-tRNA synthetase subfamily. In terms of assembly, homodimer. The tRNA molecule binds across the dimer.

Its subcellular location is the cytoplasm. It catalyses the reaction tRNA(Ser) + L-serine + ATP = L-seryl-tRNA(Ser) + AMP + diphosphate + H(+). The catalysed reaction is tRNA(Sec) + L-serine + ATP = L-seryl-tRNA(Sec) + AMP + diphosphate + H(+). The protein operates within aminoacyl-tRNA biosynthesis; selenocysteinyl-tRNA(Sec) biosynthesis; L-seryl-tRNA(Sec) from L-serine and tRNA(Sec): step 1/1. Catalyzes the attachment of serine to tRNA(Ser). Is also able to aminoacylate tRNA(Sec) with serine, to form the misacylated tRNA L-seryl-tRNA(Sec), which will be further converted into selenocysteinyl-tRNA(Sec). The polypeptide is Serine--tRNA ligase (Rickettsia canadensis (strain McKiel)).